The primary structure comprises 450 residues: Bicarbonate-binding protein CmpA (450 aa).

The tat-type signal signal peptide spans 1 to 36 (MNEFQPVNRRQFLFTLGATAASAILLKGCGNPPSSS).

The protein belongs to the CmpA/NrtA family. In terms of assembly, the complex is composed of two ATP-binding proteins (CmpC and CmpD), a transmembrane protein (CmpB) and a solute-binding protein (CmpA). Predicted to be exported by the Tat system. The position of the signal peptide cleavage has not been experimentally proven. In terms of processing, the N-terminus is blocked.

It is found in the cell inner membrane. Functionally, part of the ABC transporter complex CmpABCD involved in bicarbonate transport. Binds bicarbonate with high affinity. In Synechococcus elongatus (strain ATCC 33912 / PCC 7942 / FACHB-805) (Anacystis nidulans R2), this protein is Bicarbonate-binding protein CmpA (cmpA).